The primary structure comprises 164 residues: Sec-independent protein translocase protein TatB (164 aa).

Residues 1-21 (MIDIGLSKMALIGAVALIVIG) traverse the membrane as a helical segment. A disordered region spans residues 81-102 (ASEFQKDWESGTSDAAATGHDG).

It belongs to the TatB family. As to quaternary structure, the Tat system comprises two distinct complexes: a TatABC complex, containing multiple copies of TatA, TatB and TatC subunits, and a separate TatA complex, containing only TatA subunits. Substrates initially bind to the TatABC complex, which probably triggers association of the separate TatA complex to form the active translocon.

The protein localises to the cell inner membrane. In terms of biological role, part of the twin-arginine translocation (Tat) system that transports large folded proteins containing a characteristic twin-arginine motif in their signal peptide across membranes. Together with TatC, TatB is part of a receptor directly interacting with Tat signal peptides. TatB may form an oligomeric binding site that transiently accommodates folded Tat precursor proteins before their translocation. In Paracidovorax citrulli (strain AAC00-1) (Acidovorax citrulli), this protein is Sec-independent protein translocase protein TatB.